The chain runs to 442 residues: 2-oxoisovalerate dehydrogenase subunit alpha, mitochondrial (442 aa).

Residues 1–42 constitute a mitochondrion transit peptide; sequence MSAAKIWRPSRGLRQAALLLLGRSGVRGLARSHPSRQQQQQF. Residues 30–50 form a disordered region; that stretch reads ARSHPSRQQQQQFPSLDDKPQ. 2 residues coordinate thiamine diphosphate: Tyr-155 and Arg-156. Ser-203 is a binding site for K(+). Thiamine diphosphate is bound at residue Ser-204. K(+) is bound by residues Pro-205, Thr-208, and Gln-209. Glu-235 lines the Mg(2+) pocket. Positions 236, 237, and 262 each coordinate thiamine diphosphate. Residues Asn-264 and Tyr-266 each contribute to the Mg(2+) site. Thiamine diphosphate is bound at residue His-333. At Ser-334 the chain carries Phosphoserine; by BCKDK. Position 335 is a phosphothreonine (Thr-335). Residues Ser-336 and Ser-344 each carry the phosphoserine modification. At Lys-353 the chain carries N6-acetyllysine; alternate. An N6-succinyllysine; alternate modification is found at Lys-353. Lys-377 is subject to N6-succinyllysine.

The protein belongs to the BCKDHA family. In terms of assembly, heterotetramer of 2 alpha/BCKDHA and 2 beta chains/BCKDHB that forms the branched-chain alpha-keto acid decarboxylase (E1) component of the BCKD complex. The branched-chain alpha-ketoacid dehydrogenase is a large complex composed of three major building blocks E1, E2 and E3. It is organized around E2, a 24-meric cubic core composed of DBT, to which are associated 6 to 12 copies of E1, and approximately 6 copies of the dehydrogenase E3, a DLD dimer. Interacts with PPM1K. It depends on thiamine diphosphate as a cofactor. The cofactor is Mg(2+). In terms of processing, phosphorylated at Ser-334 by BCKDK and dephosphorylated by protein phosphatase PPM1K.

Its subcellular location is the mitochondrion matrix. The enzyme catalyses N(6)-[(R)-lipoyl]-L-lysyl-[protein] + 3-methyl-2-oxobutanoate + H(+) = N(6)-[(R)-S(8)-2-methylpropanoyldihydrolipoyl]-L-lysyl-[protein] + CO2. Its function is as follows. Together with BCKDHB forms the heterotetrameric E1 subunit of the mitochondrial branched-chain alpha-ketoacid dehydrogenase (BCKD) complex. The BCKD complex catalyzes the multi-step oxidative decarboxylation of alpha-ketoacids derived from the branched-chain amino-acids valine, leucine and isoleucine producing CO2 and acyl-CoA which is subsequently utilized to produce energy. The E1 subunit catalyzes the first step with the decarboxylation of the alpha-ketoacid forming an enzyme-product intermediate. A reductive acylation mediated by the lipoylamide cofactor of E2 extracts the acyl group from the E1 active site for the next step of the reaction. The protein is 2-oxoisovalerate dehydrogenase subunit alpha, mitochondrial of Mus musculus (Mouse).